The following is a 378-amino-acid chain: Interleukin-3 receptor subunit alpha (378 aa).

The first 18 residues, 1–18, serve as a signal peptide directing secretion; sequence MVLLWLTLLLIALPCLLQ. Residues 19 to 305 lie on the Extracellular side of the membrane; it reads TKEDPNPPIT…EEGANTRAWR (287 aa). Residues Asn46, Asn64, Asn80, and Asn109 are each glycosylated (N-linked (GlcNAc...) asparagine). Disulfide bonds link Cys52-Cys68, Cys76-Cys195, Cys112-Cys122, and Cys151-Cys165. Asn212 and Asn218 each carry an N-linked (GlcNAc...) asparagine glycan. A disulfide bond links Cys217 and Cys293. A WSXWS motif motif is present at residues 282–286; that stretch reads LSAWS. A helical membrane pass occupies residues 306 to 325; that stretch reads TSLLIALGTLLALVCVFVIC. Residues 326 to 378 lie on the Cytoplasmic side of the membrane; the sequence is RRYLVMQRLFPRIPHMKDPIGDSFQNDKLVVWEAGKAGLEECLVTEVQVVQKT. The Box 1 motif signature appears at 334–342; that stretch reads LFPRIPHMK.

The protein belongs to the type I cytokine receptor family. Type 5 subfamily. As to quaternary structure, interacts with IL3. Heterodimer of an alpha and a beta subunit. The beta subunit is common to the IL3, IL5 and GM-CSF receptors. Post-translationally, ubiquitinated by RNFT2 in response to IL3. Ubiquitination leads ligand-induced degradation by the proteasome. Ubiquitinated by RNF128 via 'Lys-27'-linked polyubiquitination, facilitating its degradation through the lysosomal pathway.

The protein resides in the cell membrane. Functionally, cell surface receptor for IL3 expressed on hematopoietic progenitor cells, monocytes and B-lymphocytes that controls the production and differentiation of hematopoietic progenitor cells into lineage-restricted cells. Ligand stimulation rapidly induces hetrodimerization with IL3RB, phosphorylation and enzyme activity of effector proteins such as JAK2 and PI3K that play a role in signaling cell proliferation and differentiation. Activation of JAK2 leads to STAT5-mediated transcriptional program. The sequence is that of Interleukin-3 receptor subunit alpha from Homo sapiens (Human).